Consider the following 285-residue polypeptide: Bifunctional protein FolD (285 aa).

Residues 166 to 168 (GRS), Ser191, and Thr232 each bind NADP(+).

The protein belongs to the tetrahydrofolate dehydrogenase/cyclohydrolase family. Homodimer.

It carries out the reaction (6R)-5,10-methylene-5,6,7,8-tetrahydrofolate + NADP(+) = (6R)-5,10-methenyltetrahydrofolate + NADPH. It catalyses the reaction (6R)-5,10-methenyltetrahydrofolate + H2O = (6R)-10-formyltetrahydrofolate + H(+). It participates in one-carbon metabolism; tetrahydrofolate interconversion. In terms of biological role, catalyzes the oxidation of 5,10-methylenetetrahydrofolate to 5,10-methenyltetrahydrofolate and then the hydrolysis of 5,10-methenyltetrahydrofolate to 10-formyltetrahydrofolate. The sequence is that of Bifunctional protein FolD from Chloroflexus aurantiacus (strain ATCC 29366 / DSM 635 / J-10-fl).